The chain runs to 908 residues: MPSSGPGDTSISSLEREDDRKEGEEQEENRGKEERQEPSATARKVGRPGRKRKHPPVESSDTPKDPAVTTKSQPTAQDSGPSDLLPNGDLEKRSEPQPEEGSPAAGQKGGAPAEGEGTETPPEASRAVENGCCVTKEGRGASAGEGKEQKQTNIESMKMEGSRGRLRGGLGWESSLRQRPMPRLTFQAGDPYYISKRKRDEWLARWKREAEKKAKVIAVMNAVEESQASGESQKVEEASPPAVQQPTDPASPTVATTPEPVGADAGDKNATKAADDEPEYEDGRGFGIGELVWGKLRGFSWWPGRIVSWWMTGRSRAAEGTRWVMWFGDGKFSVVCVEKLMPLSSFCSAFHQATYNKQPMYRKAIYEVLQVASSRAGKLFPACHDSDESDTGKAVEVQNKQMIEWALGGFQPSGPKGLEPPEEEKNPYKEVYTDMWVEPEAAAYAPPPPAKKPRKSTTEKPKVKEIIDERTRERLVYEVRQKCRNIEDICISCGSLNVTLEHPLFIGGMCQNCKNCFLECAYQYDDDGYQSYCTICCGGREVLMCGNNNCCRCFCVECVDLLVGPGAAQAAIKEDPWNCYMCGHKGTYGLLRRREDWPSRLQMFFANNHDQEFDPPKVYPPVPAEKRKPIRVLSLFDGIATGLLVLKDLGIQVDRYIASEVCEDSITVGMVRHQGKIMYVGDVRSVTQKHIQEWGPFDLVIGGSPCNDLSIVNPARKGLYEGTGRLFFEFYRLLHDARPKEGDDRPFFWLFENVVAMGVSDKRDISRFLESNPVMIDAKEVSAAHRARYFWGNLPGMNRPLASTVNDKLELQECLEHGRIAKFSKVRTITTRSNSIKQGKDQHFPVFMNEKEDILWCTEMERVFGFPVHYTDVSNMSRLARQRLLGRSWSVPVIRHLFAPLKEYFACV.

A compositionally biased stretch (polar residues) spans 1-13; the sequence is MPSSGPGDTSISS. 2 disordered regions span residues 1-183 and 226-281; these read MPSS…PMPR and SQAS…PEYE. The span at 14 to 37 shows a compositional bias: basic and acidic residues; sequence LEREDDRKEGEEQEENRGKEERQE. Residues 44 to 54 are compositionally biased toward basic residues; that stretch reads KVGRPGRKRKH. The segment covering 69–80 has biased composition (polar residues); it reads TTKSQPTAQDSG. Position 102 is a phosphoserine (S102). Positions 110–124 are enriched in low complexity; it reads GAPAEGEGTETPPEA. Position 120 is a phosphothreonine (T120). Residue K158 forms a Glycyl lysine isopeptide (Lys-Gly) (interchain with G-Cter in SUMO2) linkage. At R167 the chain carries Omega-N-methylarginine. An interaction with DNMT1 and DNMT3B region spans residues 195 to 399; the sequence is SKRKRDEWLA…DTGKAVEVQN (205 aa). A phosphoserine mark is found at S239 and S251. Residues 242-256 are compositionally biased toward polar residues; that stretch reads AVQQPTDPASPTVAT. Residue T257 is modified to Phosphothreonine. The PWWP domain occupies 257-315; the sequence is TPEPVGADAGDKNATKAADDEPEYEDGRGFGIGELVWGKLRGFSWWPGRIVSWWMTGRS. Residues 265 to 275 are compositionally biased toward basic and acidic residues; that stretch reads AGDKNATKAAD. Phosphoserine occurs at positions 386 and 389. The disordered stretch occupies residues 443 to 462; that stretch reads AYAPPPPAKKPRKSTTEKPK. Residues 478–610 enclose the ADD domain; that stretch reads EVRQKCRNIE…LQMFFANNHD (133 aa). Residues 489–519 form a GATA-type; atypical zinc finger; the sequence is ICISCGSLNVTLEHPLFIGGMCQNCKNCFLE. The segment at 490–582 is interaction with the PRC2/EED-EZH2 complex; that stretch reads CISCGSLNVT…KEDPWNCYMC (93 aa). The PHD-type; atypical zinc finger occupies 530 to 586; the sequence is QSYCTICCGGREVLMCGNNNCCRCFCVECVDLLVGPGAAQAAIKEDPWNCYMCGHKG. The region spanning 630-908 is the SAM-dependent MTase C5-type domain; sequence IRVLSLFDGI…APLKEYFACV (279 aa). Residues 637-641, E660, and 682-684 each bind S-adenosyl-L-methionine; these read DGIAT and DVR. The active site involves C706. The residue at position 706 (C706) is an S-methylcysteine; by autocatalysis. Position 887 to 889 (887 to 889) interacts with S-adenosyl-L-methionine; it reads RSW.

Belongs to the class I-like SAM-binding methyltransferase superfamily. C5-methyltransferase family. As to quaternary structure, heterotetramer composed of 1 DNMT3A homodimer and 2 DNMT3L subunits (DNMT3L-DNMT3A-DNMT3A-DNMT3L). Interacts with DNMT1 and DNMT3B. Interacts with MPHOSPH8. Interacts with histone H3 that is not methylated at 'Lys-4' (H3K4). Binds the ZBTB18 transcriptional repressor. Interacts with SETDB1. Associates with HDAC1 through its ADD domain. Interacts with UHRF1. Interacts with the PRC2/EED-EZH2 complex. Interacts with UBC9, PIAS1 and PIAS2. Interacts with SPOCD1. Interacts with ZNF263; recruited to the SIX3 promoter along with other proteins involved in chromatin modification and transcriptional corepression where it contributes to transcriptional repression. In terms of processing, sumoylated; sumoylation disrupts the ability to interact with histone deacetylases (HDAC1 and HDAC2) and repress transcription. Auto-methylated at Cys-706: auto-methylation takes place in absence of DNA substrate and inactivates the DNA methyltransferase activity. Inactivation by auto-methylation may be used to inactivate unused DNA methyltransferases in the cell.

It localises to the nucleus. It is found in the chromosome. The protein resides in the cytoplasm. The catalysed reaction is a 2'-deoxycytidine in DNA + S-adenosyl-L-methionine = a 5-methyl-2'-deoxycytidine in DNA + S-adenosyl-L-homocysteine + H(+). It carries out the reaction L-cysteinyl-[protein] + S-adenosyl-L-methionine = S-methyl-L-cysteinyl-[protein] + S-adenosyl-L-homocysteine + H(+). With respect to regulation, activated by binding to the regulatory factor DNMT3L. Auto-methylation at Cys-706 in absence of DNA inactivates the DNA methyltransferase activity. Required for genome-wide de novo methylation and is essential for the establishment of DNA methylation patterns during development. DNA methylation is coordinated with methylation of histones. It modifies DNA in a non-processive manner and also methylates non-CpG sites. May preferentially methylate DNA linker between 2 nucleosomal cores and is inhibited by histone H1. Plays a role in paternal and maternal imprinting. Required for methylation of most imprinted loci in germ cells. Acts as a transcriptional corepressor for ZBTB18. Recruited to trimethylated 'Lys-36' of histone H3 (H3K36me3) sites. Can actively repress transcription through the recruitment of HDAC activity. Also has weak auto-methylation activity on Cys-706 in absence of DNA. This Rattus norvegicus (Rat) protein is DNA (cytosine-5)-methyltransferase 3A (Dnmt3a).